The primary structure comprises 507 residues: Histidine ammonia-lyase (507 aa).

Positions 141–143 (ASG) form a cross-link, 5-imidazolinone (Ala-Gly). Serine 142 is subject to 2,3-didehydroalanine (Ser).

It belongs to the PAL/histidase family. Contains an active site 4-methylidene-imidazol-5-one (MIO), which is formed autocatalytically by cyclization and dehydration of residues Ala-Ser-Gly.

The protein localises to the cytoplasm. The catalysed reaction is L-histidine = trans-urocanate + NH4(+). It participates in amino-acid degradation; L-histidine degradation into L-glutamate; N-formimidoyl-L-glutamate from L-histidine: step 1/3. The polypeptide is Histidine ammonia-lyase (Natranaerobius thermophilus (strain ATCC BAA-1301 / DSM 18059 / JW/NM-WN-LF)).